A 1229-amino-acid polypeptide reads, in one-letter code: Pesticidal crystal protein Cry1Bb (1229 aa).

It belongs to the delta endotoxin family.

Its function is as follows. Promotes colloidosmotic lysis by binding to the midgut epithelial cells of many lepidopteran larvae. The protein is Pesticidal crystal protein Cry1Bb (cry1Bb) of Bacillus thuringiensis.